We begin with the raw amino-acid sequence, 82 residues long: UPF0729 protein C18orf32 homolog (82 aa).

The tract at residues 1-37 (MVCIPCIVIPVLLWVYKKFLEPIVYPFISPIINRIWP) is necessary for its localzation to the endoplasmic reticulum and lipid droplets. The disordered stretch occupies residues 46–82 (TSAKKEESNGTCKASGTSITNGSVSRGEEAVPDKKTD). Positions 54 to 69 (NGTCKASGTSITNGSV) are enriched in polar residues. The span at 71 to 82 (RGEEAVPDKKTD) shows a compositional bias: basic and acidic residues.

The protein belongs to the UPF0729 family.

The protein localises to the endoplasmic reticulum. Its subcellular location is the lipid droplet. This is UPF0729 protein C18orf32 homolog from Xenopus tropicalis (Western clawed frog).